The sequence spans 447 residues: Signal recognition particle 54 kDa protein (447 aa).

GTP contacts are provided by residues 103-110 (GVQGSGKT), 185-189 (DTAGR), and 245-248 (TKMD).

It belongs to the GTP-binding SRP family. SRP54 subfamily. Part of the signal recognition particle protein translocation system, which is composed of SRP and FtsY. Archaeal SRP consists of a 7S RNA molecule of 300 nucleotides and two protein subunits: SRP54 and SRP19.

Its subcellular location is the cytoplasm. It carries out the reaction GTP + H2O = GDP + phosphate + H(+). Functionally, involved in targeting and insertion of nascent membrane proteins into the cytoplasmic membrane. Binds to the hydrophobic signal sequence of the ribosome-nascent chain (RNC) as it emerges from the ribosomes. The SRP-RNC complex is then targeted to the cytoplasmic membrane where it interacts with the SRP receptor FtsY. In Saccharolobus solfataricus (strain ATCC 35092 / DSM 1617 / JCM 11322 / P2) (Sulfolobus solfataricus), this protein is Signal recognition particle 54 kDa protein.